The primary structure comprises 159 residues: 2-C-methyl-D-erythritol 2,4-cyclodiphosphate synthase (159 aa).

Residues aspartate 9 and histidine 11 each coordinate a divalent metal cation. 4-CDP-2-C-methyl-D-erythritol 2-phosphate contacts are provided by residues 9 to 11 and 35 to 36; these read DVH and HS. Histidine 43 provides a ligand contact to a divalent metal cation. 4-CDP-2-C-methyl-D-erythritol 2-phosphate-binding positions include 57-59, 62-66, 133-136, phenylalanine 140, and arginine 143; these read DLG, FPDTD, and TTTE.

The protein belongs to the IspF family. As to quaternary structure, homotrimer. Requires a divalent metal cation as cofactor.

The enzyme catalyses 4-CDP-2-C-methyl-D-erythritol 2-phosphate = 2-C-methyl-D-erythritol 2,4-cyclic diphosphate + CMP. Its pathway is isoprenoid biosynthesis; isopentenyl diphosphate biosynthesis via DXP pathway; isopentenyl diphosphate from 1-deoxy-D-xylulose 5-phosphate: step 4/6. In terms of biological role, involved in the biosynthesis of isopentenyl diphosphate (IPP) and dimethylallyl diphosphate (DMAPP), two major building blocks of isoprenoid compounds. Catalyzes the conversion of 4-diphosphocytidyl-2-C-methyl-D-erythritol 2-phosphate (CDP-ME2P) to 2-C-methyl-D-erythritol 2,4-cyclodiphosphate (ME-CPP) with a corresponding release of cytidine 5-monophosphate (CMP). The sequence is that of 2-C-methyl-D-erythritol 2,4-cyclodiphosphate synthase from Shouchella clausii (strain KSM-K16) (Alkalihalobacillus clausii).